The following is a 506-amino-acid chain: Histidine ammonia-lyase (506 aa).

The 5-imidazolinone (Ala-Gly) cross-link spans 142-144; sequence ASG. Ser-143 carries the post-translational modification 2,3-didehydroalanine (Ser).

It belongs to the PAL/histidase family. Contains an active site 4-methylidene-imidazol-5-one (MIO), which is formed autocatalytically by cyclization and dehydration of residues Ala-Ser-Gly.

It localises to the cytoplasm. It carries out the reaction L-histidine = trans-urocanate + NH4(+). It functions in the pathway amino-acid degradation; L-histidine degradation into L-glutamate; N-formimidoyl-L-glutamate from L-histidine: step 1/3. The chain is Histidine ammonia-lyase from Bacillus cereus (strain B4264).